Consider the following 115-residue polypeptide: UPF0342 protein Bsph_0375 (115 aa).

Belongs to the UPF0342 family.

This Lysinibacillus sphaericus (strain C3-41) protein is UPF0342 protein Bsph_0375.